The sequence spans 80 residues: MNKKKIISILKEKLNLKDIYVTEDNNHYEITAIGNVFKGLTQVKRQKKIYNPLIDLITENKIHAISIKSYSLEEWDKNQK.

This sequence belongs to the BolA/IbaG family.

This is an uncharacterized protein from Buchnera aphidicola subsp. Schizaphis graminum (strain Sg).